The chain runs to 524 residues: MVPQVLLFVPLLVFSMCFGKFPIYTIPDKLGPWSPIDIHHLSCPNNLVVEDEGCTNLSGFSYMELKVGYISAIKVNGFTCTGVVTEAETYTNFVGYVTTTFKRKHFRPTPDACRAAYNWKMAGDPRYEESLHNPYPDYHWLRTVKTTKESLVIISPSVADLDPYDKSLHSRVFPSGKCSGITISSTYCSTNHDYTIWMPENPRLGTSCDIFTNSRGKRASKGGKTCGFVDERGLYKSLKGACKLKLCGVLGLRLMDGTWVAMQTSDETKWCPPDQLVNLHDFRSDEIEHLVVEELVKKREECLDALESIMATKSVSFRRLSHLRKLVPGFGKAYTIFNKTLMEADAHYKSVRTWNEIIPSKGCLRVGGRCHPHVNGVFFNGIILGPDGHVLIPEMQSSLLQQHMELLESSVIPLMHPLADPSTVFKDGDEAEDFVEVHLPDVHKQISGVDLGLPSWGKYVLVSAGVLVVLMLTIFIMTCCGRVHRPKSTQHGLGGTGRKVSVTSQSGKVISSWESYKSGGETRL.

A signal peptide spans 1-19 (MVPQVLLFVPLLVFSMCFG). Residues 20-459 (KFPIYTIPDK…DLGLPSWGKY (440 aa)) lie on the Virion surface side of the membrane. Disulfide bonds link Cys-43–Cys-302, Cys-54–Cys-226, Cys-80–Cys-113, Cys-178–Cys-188, Cys-208–Cys-247, and Cys-242–Cys-271. A glycan (N-linked (GlcNAc...) asparagine; by host) is linked at Asn-56. Asn-338 carries an N-linked (GlcNAc...) asparagine; by host glycan. The cysteines at positions 363 and 370 are disulfide-linked. Residues 460-480 (VLVSAGVLVVLMLTIFIMTCC) traverse the membrane as a helical segment. Cys-480 carries S-palmitoyl cysteine; by host lipidation. Topologically, residues 481–524 (GRVHRPKSTQHGLGGTGRKVSVTSQSGKVISSWESYKSGGETRL) are intravirion.

Belongs to the lyssavirus glycoprotein family. Homotrimer. Interacts with matrix protein. Interacts with host TRFC. Interacts with host BST2; this interaction inhibits viral budding by tethering new virions to the cell surface. Interacts with ITGB1. Interacts with host GRM2. Glycosylated and palmitoylated by host. Glycosylation is crucial for glycoprotein export at the cell surface.

It localises to the virion membrane. Attaches the virus to host cellular receptor, inducing endocytosis of the virion by using different host proteins including TFRC, GRM2 and ITGB1. In the endosome, the acidic pH induces conformational changes in the glycoprotein trimer, which trigger fusion between virus and cell membrane. There is convincing in vitro evidence that the muscular form of the nicotinic acetylcholine receptor (nAChR), the neuronal cell adhesion molecule (NCAM), and the p75 neurotrophin receptor (p75NTR) bind glycoprotein and thereby facilitate rabies virus entry into cells. This is Glycoprotein (G) from Homo sapiens (Human).